The sequence spans 503 residues: Probable cytosol aminopeptidase (503 aa).

Mn(2+) is bound by residues Lys270 and Asp275. Lys282 is a catalytic residue. Residues Asp293, Asp352, and Glu354 each coordinate Mn(2+). Residue Arg356 is part of the active site.

It belongs to the peptidase M17 family. Mn(2+) is required as a cofactor.

The protein localises to the cytoplasm. It catalyses the reaction Release of an N-terminal amino acid, Xaa-|-Yaa-, in which Xaa is preferably Leu, but may be other amino acids including Pro although not Arg or Lys, and Yaa may be Pro. Amino acid amides and methyl esters are also readily hydrolyzed, but rates on arylamides are exceedingly low.. The enzyme catalyses Release of an N-terminal amino acid, preferentially leucine, but not glutamic or aspartic acids.. Functionally, presumably involved in the processing and regular turnover of intracellular proteins. Catalyzes the removal of unsubstituted N-terminal amino acids from various peptides. The chain is Probable cytosol aminopeptidase from Pectobacterium atrosepticum (strain SCRI 1043 / ATCC BAA-672) (Erwinia carotovora subsp. atroseptica).